Reading from the N-terminus, the 353-residue chain is Lactosylceramide 4-alpha-galactosyltransferase (353 aa).

The Cytoplasmic segment spans residues 1–22 (MSKPPDLLLRLLRGAPRQRVCT). Residues 23-43 (LFIIGFKFTFFVSIMIYWHVV) traverse the membrane as a helical; Signal-anchor for type II membrane protein segment. At 44-353 (GEPKEKGQLY…TTHEAMKMYL (310 aa)) the chain is on the lumenal side. N-linked (GlcNAc...) asparagine glycosylation occurs at N121. Residues 192 to 194 (DTD) carry the DXD motif motif. The N-linked (GlcNAc...) asparagine glycan is linked to N203.

The protein belongs to the glycosyltransferase 32 family.

The protein localises to the golgi apparatus membrane. It catalyses the reaction a beta-D-Gal-(1-&gt;4)-beta-D-Glc-(1&lt;-&gt;1)-Cer(d18:1(4E)) + UDP-alpha-D-galactose = a globoside Gb3Cer (d18:1(4E)) + UDP + H(+). The enzyme catalyses a beta-D-Gal-(1&lt;-&gt;1')-ceramide + UDP-alpha-D-galactose = alpha-D-Gal-(1-&gt;4)-beta-D-Gal-(1&lt;-&gt;1')-Cer + UDP + H(+). The protein operates within glycolipid biosynthesis. In terms of biological role, catalyzes the transfer of galactose from UDP-alpha-D-galactose to lactosylceramide/beta-D-galactosyl-(1-&gt;4)-beta-D-glucosyl-(1&lt;-&gt;1)-ceramide(d18:1(4E)) to produce globotriaosylceramide/globoside Gb3Cer (d18:1(4E)). Also able to transfer galactose to galactosylceramide/beta-D-Gal-(1&lt;-&gt;1')-Cer. Globoside Gb3Cer is a glycosphingolipid of the globo serie, one of the major types of neutral root structures of glycosphingolipids, that constitute a significant portion of mammalian cell membranes. The protein is Lactosylceramide 4-alpha-galactosyltransferase (A4GALT) of Pan troglodytes (Chimpanzee).